The sequence spans 437 residues: Probable carboxypeptidase HCBG_00059 (437 aa).

The first 20 residues, Met1–Ala20, serve as a signal peptide directing secretion. An N-linked (GlcNAc...) asparagine glycan is attached at Asn153. Asp163 serves as a coordination point for Zn(2+). The Proton acceptor role is filled by Glu195. Residue Glu196 participates in Zn(2+) binding. The N-linked (GlcNAc...) asparagine glycan is linked to Asn346.

It belongs to the peptidase M20A family. Requires Zn(2+) as cofactor.

It localises to the secreted. The chain is Probable carboxypeptidase HCBG_00059 from Ajellomyces capsulatus (strain G186AR / H82 / ATCC MYA-2454 / RMSCC 2432) (Darling's disease fungus).